We begin with the raw amino-acid sequence, 104 residues long: N(4)-acetylcytidine amidohydrolase (104 aa).

The ASCH domain occupies 6–102 (ITFYQRFEAD…SEFWVIEIRL (97 aa)). Catalysis depends on Lys21, which acts as the Proton acceptor. The active-site Nucleophile is the Thr24. Glu74 (proton donor) is an active-site residue.

This sequence belongs to the N(4)-acetylcytidine amidohydrolase family.

The catalysed reaction is N(4)-acetylcytidine + H2O = cytidine + acetate + H(+). The enzyme catalyses N(4)-acetyl-2'-deoxycytidine + H2O = 2'-deoxycytidine + acetate + H(+). It carries out the reaction N(4)-acetylcytosine + H2O = cytosine + acetate + H(+). Functionally, catalyzes the hydrolysis of N(4)-acetylcytidine (ac4C). In Haemophilus influenzae (strain PittEE), this protein is N(4)-acetylcytidine amidohydrolase.